Consider the following 177-residue polypeptide: B-phycoerythrin beta chain (177 aa).

Residues Cys50 and Cys61 each coordinate phycourobilin. Asn72 is subject to N4-methylasparagine. (2R,3E)-phycoerythrobilin-binding residues include Cys82 and Cys158.

Belongs to the phycobiliprotein family. As to quaternary structure, heteromer of 6 alpha, 6 beta and one gamma chain. Contains two covalently linked phycoerythrobilin chromophores and one covalently linked phycourobilin chromophore.

It is found in the plastid. The protein localises to the chloroplast thylakoid membrane. In terms of biological role, light-harvesting photosynthetic bile pigment-protein from the phycobiliprotein complex. In Rhodella violacea (Red alga), this protein is B-phycoerythrin beta chain (cpeB).